A 141-amino-acid polypeptide reads, in one-letter code: Putative pre-16S rRNA nuclease (141 aa).

This sequence belongs to the YqgF nuclease family.

The protein resides in the cytoplasm. Could be a nuclease involved in processing of the 5'-end of pre-16S rRNA. The protein is Putative pre-16S rRNA nuclease of Vibrio parahaemolyticus serotype O3:K6 (strain RIMD 2210633).